The following is a 293-amino-acid chain: Elongation factor Ts (293 aa).

Positions 80–83 (TDFV) are involved in Mg(2+) ion dislocation from EF-Tu.

Belongs to the EF-Ts family.

It localises to the cytoplasm. In terms of biological role, associates with the EF-Tu.GDP complex and induces the exchange of GDP to GTP. It remains bound to the aminoacyl-tRNA.EF-Tu.GTP complex up to the GTP hydrolysis stage on the ribosome. This Paraburkholderia phymatum (strain DSM 17167 / CIP 108236 / LMG 21445 / STM815) (Burkholderia phymatum) protein is Elongation factor Ts.